We begin with the raw amino-acid sequence, 508 residues long: 2,3-bisphosphoglycerate-independent phosphoglycerate mutase (508 aa).

Mn(2+) is bound by residues aspartate 9 and serine 59. Residue serine 59 is the Phosphoserine intermediate of the active site. Substrate-binding positions include histidine 120, 149–150, arginine 181, arginine 187, 254–257, and lysine 331; these read RD and RADR. Mn(2+) contacts are provided by aspartate 398, histidine 402, aspartate 439, histidine 440, and histidine 456.

Belongs to the BPG-independent phosphoglycerate mutase family. Mn(2+) is required as a cofactor.

It carries out the reaction (2R)-2-phosphoglycerate = (2R)-3-phosphoglycerate. Its pathway is carbohydrate degradation; glycolysis; pyruvate from D-glyceraldehyde 3-phosphate: step 3/5. Catalyzes the interconversion of 2-phosphoglycerate and 3-phosphoglycerate. This Halobacterium salinarum (strain ATCC 700922 / JCM 11081 / NRC-1) (Halobacterium halobium) protein is 2,3-bisphosphoglycerate-independent phosphoglycerate mutase.